A 200-amino-acid polypeptide reads, in one-letter code: Recombination protein RecR (200 aa).

The C4-type zinc-finger motif lies at 59–74 (CDICGNVCESSPCPVC). The 96-residue stretch at 82 to 177 (SVICVVEEPK…KVTRLASGLP (96 aa)) folds into the Toprim domain.

It belongs to the RecR family.

In terms of biological role, may play a role in DNA repair. It seems to be involved in an RecBC-independent recombinational process of DNA repair. It may act with RecF and RecO. The sequence is that of Recombination protein RecR from Bifidobacterium longum (strain DJO10A).